We begin with the raw amino-acid sequence, 615 residues long: Filament-like plant protein 3 (615 aa).

Residues 1 to 18 show a composition bias toward basic and acidic residues; sequence MDRRSWLWRRKSSEKSPG. The tract at residues 1–55 is disordered; that stretch reads MDRRSWLWRRKSSEKSPGETESTGSVSSHSERFSDDQRSQSPELNSKPVTREEEA. Over residues 19–28 the composition is skewed to polar residues; that stretch reads ETESTGSVSS. A compositionally biased stretch (basic and acidic residues) spans 29–38; the sequence is HSERFSDDQR. Polar residues predominate over residues 39-48; it reads SQSPELNSKP. Coiled-coil stretches lie at residues 87-121 and 148-211; these read AEEAVSGWEKAENEAAALKQQLDASTSKVSALEDR and EEAI…KSEE. Disordered stretches follow at residues 258–289 and 319–343; these read DNSSDLKSSIDNQSDYSGRVSFSDNEMQSPSE and PHSEPGRKHSESNKELEKSNAHVNQ. The span at 262 to 288 shows a compositional bias: polar residues; the sequence is DLKSSIDNQSDYSGRVSFSDNEMQSPS. The segment covering 322–343 has biased composition (basic and acidic residues); the sequence is EPGRKHSESNKELEKSNAHVNQ. Residues 327 to 563 adopt a coiled-coil conformation; that stretch reads HSESNKELEK…KQELEHHQET (237 aa).

This sequence belongs to the FPP family. As to quaternary structure, interacts with WPP/MAF proteins. Binds to COG2; this interaction promotes the association between cortical microtubules and EXO70A1. As to expression, accumulates in preferentially xylem cells.

The protein localises to the vesicle. Its function is as follows. Ensures, when in complex with COG2 and FPP2/VETH2, the correct secondary cell wall (SCW) deposition pattern by recruiting exocyst components to cortical microtubules in xylem cells during secondary cell wall deposition by recruiting EXO70A1. The polypeptide is Filament-like plant protein 3 (Arabidopsis thaliana (Mouse-ear cress)).